The primary structure comprises 507 residues: Ribonuclease Y (507 aa).

The helical transmembrane segment at 1 to 21 (MLWYIVAGAGGLLIGYLIANY) threads the bilayer. Residues 197 to 282 (TVSTVSLPSD…EMYEKAKQEV (86 aa)) enclose the KH domain. Residues 323 to 416 (VLNHSIEVAL…VAAADALSAA (94 aa)) form the HD domain.

The protein belongs to the RNase Y family.

The protein resides in the cell membrane. Functionally, endoribonuclease that initiates mRNA decay. The chain is Ribonuclease Y from Thermotoga sp. (strain RQ2).